Reading from the N-terminus, the 356-residue chain is S-adenosylmethionine:tRNA ribosyltransferase-isomerase (356 aa).

Belongs to the QueA family. Monomer.

It is found in the cytoplasm. It catalyses the reaction 7-aminomethyl-7-carbaguanosine(34) in tRNA + S-adenosyl-L-methionine = epoxyqueuosine(34) in tRNA + adenine + L-methionine + 2 H(+). It participates in tRNA modification; tRNA-queuosine biosynthesis. Functionally, transfers and isomerizes the ribose moiety from AdoMet to the 7-aminomethyl group of 7-deazaguanine (preQ1-tRNA) to give epoxyqueuosine (oQ-tRNA). The polypeptide is S-adenosylmethionine:tRNA ribosyltransferase-isomerase (Yersinia pseudotuberculosis serotype IB (strain PB1/+)).